The sequence spans 1134 residues: Mediator of RNA polymerase II transcription subunit 12 (1134 aa).

It belongs to the Mediator complex subunit 12 family. In terms of assembly, component of the srb8-11 complex which consists of rb8, srb9(TRAP240), srb10 and srb11. The srb8-11 complex associates with the Mediator complex thereby blocking association with RNA polymerase II and leading to reduced transcriptional activation by Mediator.

It localises to the nucleus. Functionally, component of the srb8-11 complex. The srb8-11 complex is a regulatory module of the Mediator complex which is itself involved in regulation of basal and activated RNA polymerase II-dependent transcription. The srb8-11 complex may be involved in the transcriptional repression of a subset of genes regulated by Mediator. It may inhibit the association of the Mediator complex with RNA polymerase II to form the holoenzyme complex. This Schizosaccharomyces pombe (strain 972 / ATCC 24843) (Fission yeast) protein is Mediator of RNA polymerase II transcription subunit 12 (srb8).